The sequence spans 225 residues: Cytidylate kinase (225 aa).

ATP is bound at residue 11–19 (GPAAAGKST).

Belongs to the cytidylate kinase family. Type 1 subfamily.

Its subcellular location is the cytoplasm. It catalyses the reaction CMP + ATP = CDP + ADP. The catalysed reaction is dCMP + ATP = dCDP + ADP. This chain is Cytidylate kinase, found in Bacillus anthracis (strain A0248).